The following is an 878-amino-acid chain: NUT family member 2E (878 aa).

5 disordered regions span residues 273 to 324 (WSQG…DDSC), 417 to 511 (QKSQ…VPEE), 527 to 560 (LLGPSLGATGEPEKQREEGKVKQPQEEDWTPPDP), 622 to 757 (RLPP…EEEE), and 775 to 878 (WLPQ…HCSQ). Pro residues-rich tracts occupy residues 278–288 (PLPPPPPPAAQ) and 427–444 (CLPPPATPRLEPRGPPAP). Composition is skewed to basic and acidic residues over residues 537–551 (EPEKQREEGKVKQPQ) and 622–631 (RLPPLKEKQH).

Belongs to the NUT family.

The polypeptide is NUT family member 2E (NUTM2E) (Homo sapiens (Human)).